Consider the following 188-residue polypeptide: dCTP deaminase (188 aa).

Residues 111–116, 135–137, Q156, Y170, and Q180 each bind dCTP; these read KSTYAR and TLE. Residue E137 is the Proton donor/acceptor of the active site.

This sequence belongs to the dCTP deaminase family. As to quaternary structure, homotrimer.

It catalyses the reaction dCTP + H2O + H(+) = dUTP + NH4(+). The protein operates within pyrimidine metabolism; dUMP biosynthesis; dUMP from dCTP (dUTP route): step 1/2. Catalyzes the deamination of dCTP to dUTP. This Pseudomonas fluorescens (strain Pf0-1) protein is dCTP deaminase.